The chain runs to 383 residues: Protein phosphatase 2C homolog 4 (383 aa).

The 306-residue stretch at 51-356 folds into the PPM-type phosphatase domain; it reads SLGLCTARGD…DDITCLVVRL (306 aa). Mn(2+) is bound by residues Asp92, Asp308, and Asp347.

Belongs to the PP2C family. In terms of assembly, monomer. It depends on Mg(2+) as a cofactor. Mn(2+) serves as cofactor.

It is found in the vacuole membrane. The catalysed reaction is O-phospho-L-seryl-[protein] + H2O = L-seryl-[protein] + phosphate. The enzyme catalyses O-phospho-L-threonyl-[protein] + H2O = L-threonyl-[protein] + phosphate. Has a role in the regulation of vacuole fusion. This is Protein phosphatase 2C homolog 4 (ptc4) from Schizosaccharomyces pombe (strain 972 / ATCC 24843) (Fission yeast).